A 346-amino-acid polypeptide reads, in one-letter code: Small ribosomal subunit biogenesis GTPase RsgA (346 aa).

The interval M1–H25 is disordered. Residues T7–K20 show a composition bias toward polar residues. The region spanning E103–F271 is the CP-type G domain. Residues N159–D162 and G213–S221 each bind GTP. Zn(2+)-binding residues include C295, C300, H302, and C308.

It belongs to the TRAFAC class YlqF/YawG GTPase family. RsgA subfamily. As to quaternary structure, monomer. Associates with 30S ribosomal subunit, binds 16S rRNA. The cofactor is Zn(2+).

It is found in the cytoplasm. Functionally, one of several proteins that assist in the late maturation steps of the functional core of the 30S ribosomal subunit. Helps release RbfA from mature subunits. May play a role in the assembly of ribosomal proteins into the subunit. Circularly permuted GTPase that catalyzes slow GTP hydrolysis, GTPase activity is stimulated by the 30S ribosomal subunit. The sequence is that of Small ribosomal subunit biogenesis GTPase RsgA from Haemophilus influenzae (strain ATCC 51907 / DSM 11121 / KW20 / Rd).